The sequence spans 348 residues: Dihydroorotase (348 aa).

Histidine 17 and histidine 19 together coordinate Zn(2+). Substrate-binding positions include 19 to 21 and asparagine 45; that span reads HLR. Residues lysine 103, histidine 140, and histidine 178 each coordinate Zn(2+). Lysine 103 is subject to N6-carboxylysine. Histidine 140 serves as a coordination point for substrate. Substrate is bound at residue leucine 223. Aspartate 251 provides a ligand contact to Zn(2+). Aspartate 251 is an active-site residue. Substrate contacts are provided by histidine 255 and alanine 267.

This sequence belongs to the metallo-dependent hydrolases superfamily. DHOase family. Class II DHOase subfamily. In terms of assembly, homodimer. Zn(2+) serves as cofactor.

It carries out the reaction (S)-dihydroorotate + H2O = N-carbamoyl-L-aspartate + H(+). It participates in pyrimidine metabolism; UMP biosynthesis via de novo pathway; (S)-dihydroorotate from bicarbonate: step 3/3. Catalyzes the reversible cyclization of carbamoyl aspartate to dihydroorotate. In Shigella flexneri, this protein is Dihydroorotase.